Reading from the N-terminus, the 499-residue chain is Protein SENSITIVE TO PROTON RHIZOTOXICITY 1 (499 aa).

The tract at residues 1–31 (METEDDLCNTNWGSSSSKSREPGSSDCGNST) is disordered. The segment at 244–266 (HFCTICGKGFKRDANLRMHMRGH) adopts a C2H2-type 1 zinc-finger fold. Residues 354-385 (KHCGKNKWLCSCGTTFSRKDKLFGHIALFQGH) form a C2H2-type 2; atypical zinc finger. The interval 390-436 (PLEETKPSASTSTQRGSSEGGNNNQGMVGFNLGSASNANQETTQPGM) is disordered. Polar residues-rich tracts occupy residues 396–415 (PSASTSTQRGSSEGGNNNQG) and 422–435 (GSASNANQETTQPG).

Expressed in roots (e.g. root tips and lateral roots), leaves, flowers (e.g. stigma, sepal, anther, and filament), stems, siliques and cotyledons.

It is found in the nucleus. Probable transcription factor. Together with STOP2, plays a critical role in tolerance to major stress factors in acid soils such as proton H(+) and aluminum ion Al(3+). Required for the expression of genes in response to acidic stress (e.g. ALMT1 and MATE), and Al-activated citrate exudation. The polypeptide is Protein SENSITIVE TO PROTON RHIZOTOXICITY 1 (Arabidopsis thaliana (Mouse-ear cress)).